The sequence spans 233 residues: MLKPISALNDNYIWVYGRENCPVIVVDITEIEPLLPFLRENKFAVEAVLLTHKHDDHVGGVAAFKRYFPDVPVYGPQECADKGATRIVNEGEIVTANYRIRVIPTGGHTAQHVSYVTDGCLFCGDTLFSAGCGRVFTGNYGQMYDSVQRLKTLPDDTLVCPAHEYTLANLAFAESVMKDKSAVKNQRVLVEKKRAENRPSVPTTLGLEKQINPFLIAENPAQFETWRKAKDQF.

The Zn(2+) site is built by His52, His54, Asp56, His57, His108, Asp125, and His163.

This sequence belongs to the metallo-beta-lactamase superfamily. Glyoxalase II family. In terms of assembly, monomer. Zn(2+) serves as cofactor.

It catalyses the reaction an S-(2-hydroxyacyl)glutathione + H2O = a 2-hydroxy carboxylate + glutathione + H(+). Its pathway is secondary metabolite metabolism; methylglyoxal degradation; (R)-lactate from methylglyoxal: step 2/2. In terms of biological role, thiolesterase that catalyzes the hydrolysis of S-D-lactoyl-glutathione to form glutathione and D-lactic acid. The protein is Hydroxyacylglutathione hydrolase of Actinobacillus succinogenes (strain ATCC 55618 / DSM 22257 / CCUG 43843 / 130Z).